The chain runs to 118 residues: UPF0102 protein PC1_0307 (118 aa).

The protein belongs to the UPF0102 family.

The polypeptide is UPF0102 protein PC1_0307 (Pectobacterium carotovorum subsp. carotovorum (strain PC1)).